Reading from the N-terminus, the 258-residue chain is UPF0758 protein BamMC406_2419 (258 aa).

A disordered region spans residues 13 to 42; sequence CRDPADAPAAPARHTGPARPRKRRPRNWKP. A compositionally biased stretch (basic residues) spans 31 to 42; it reads RPRKRRPRNWKP. The MPN domain occupies 136 to 258; sequence QIDSPGAVED…TFSFARAGWL (123 aa). Residues His207, His209, and Asp220 each coordinate Zn(2+). A JAMM motif motif is present at residues 207-220; the sequence is HNHPSGAVQPSAED.

It belongs to the UPF0758 family.

In Burkholderia ambifaria (strain MC40-6), this protein is UPF0758 protein BamMC406_2419.